We begin with the raw amino-acid sequence, 531 residues long: MAAVKTLNPKAEVARAQAALAVNISAARGLQDVLRTNLGPKGTMKMLVSGAGDIKLTKDGNVLLHEMQIQHPTASLIAKVATAQDDITGDGTTSNVLIIGELLKQADLYISEGLHPRIITEGFEAAKEKALQFLEEVKVSREMDRETLIDVARTSLRTKVHAELADVLTEAVVDSILAIKKQDEPIDLFMIEIMEMKHKSETDTSLIRGLVLDHGARHPDMKKRVEDAYILTCNVSLEYEKTEVNSGFFYKSAEEREKLVKAERKFIEDRVKKIIELKRKVCGDSDKGFVVINQKGIDPFSLDALSKEGIVALRRAKRRNMERLTLACGGVALNSFDDLSPDCLGHAGLVYEYTLGEEKFTFIEKCNNPRSVTLLIKGPNKHTLTQIKDAVRDGLRAVKNAIDDGCVVPGAGAVEVAMAEALIKHKPSVKGRAQLGVQAFADALLIIPKVLAQNSGFDLQETLVKIQAEHSESGQLVGVDLNTGEPMVAAEVGVWDNYCVKKQLLHSCTVIATNILLVDEIMRAGMSSLKG.

The residue at position 2 (Ala-2) is an N-acetylalanine. Residue Lys-5 is modified to N6-acetyllysine. Gly-39 lines the ADP pocket. Gly-39 serves as a coordination point for ATP. Asp-90 serves as a coordination point for Mg(2+). The ADP site is built by Gly-91, Thr-92, Thr-93, Ser-94, Thr-158, and Lys-159. Gly-91, Thr-92, and Thr-93 together coordinate ATP. Residue Lys-199 is modified to N6-acetyllysine. Ser-205 carries the post-translational modification Phosphoserine. Lys-251 is covalently cross-linked (Glycyl lysine isopeptide (Lys-Gly) (interchain with G-Cter in SUMO2)). N6-acetyllysine is present on residues Lys-287, Lys-365, Lys-377, and Lys-388. Ala-411 serves as a coordination point for ADP. ATP contacts are provided by Ala-411, Gly-412, Asp-496, and Lys-501. ADP is bound at residue Asp-496.

The protein belongs to the TCP-1 chaperonin family. In terms of assembly, component of the chaperonin-containing T-complex (TRiC), a hexadecamer composed of two identical back-to-back stacked rings enclosing a protein folding chamber. Each ring is made up of eight different subunits: TCP1/CCT1, CCT2, CCT3, CCT4, CCT5, CCT6A/CCT6, CCT7, CCT8. Interacts with PACRG.

It localises to the cytoplasm. It carries out the reaction ATP + H2O = ADP + phosphate + H(+). Component of the chaperonin-containing T-complex (TRiC), a molecular chaperone complex that assists the folding of actin, tubulin and other proteins upon ATP hydrolysis. The TRiC complex mediates the folding of WRAP53/TCAB1, thereby regulating telomere maintenance. This is T-complex protein 1 subunit zeta (CCT6A) from Homo sapiens (Human).